Reading from the N-terminus, the 92-residue chain is SPbeta prophage-derived DNA-binding protein HU 2 (92 aa).

Thr-4 carries the post-translational modification Phosphothreonine. Residues 55 to 77 (RAARKGRNPQTGEEIDIPATKAP) form a disordered region.

Belongs to the bacterial histone-like protein family. As to quaternary structure, homodimer.

Functionally, histone-like DNA-binding protein which is capable of wrapping DNA to stabilize it, and thus to prevent its denaturation under extreme environmental conditions. The chain is SPbeta prophage-derived DNA-binding protein HU 2 (hup2) from Bacillus subtilis (strain 168).